We begin with the raw amino-acid sequence, 879 residues long: Alanine--tRNA ligase (879 aa).

Residues His566, His570, Cys668, and His672 each contribute to the Zn(2+) site.

It belongs to the class-II aminoacyl-tRNA synthetase family. Requires Zn(2+) as cofactor.

It localises to the cytoplasm. It catalyses the reaction tRNA(Ala) + L-alanine + ATP = L-alanyl-tRNA(Ala) + AMP + diphosphate. Its function is as follows. Catalyzes the attachment of alanine to tRNA(Ala) in a two-step reaction: alanine is first activated by ATP to form Ala-AMP and then transferred to the acceptor end of tRNA(Ala). Also edits incorrectly charged Ser-tRNA(Ala) and Gly-tRNA(Ala) via its editing domain. The polypeptide is Alanine--tRNA ligase (Clostridium tetani (strain Massachusetts / E88)).